A 329-amino-acid chain; its full sequence is DNA-directed RNA polymerase subunit alpha (329 aa).

Positions 1–235 (MQGSVTEFLK…EQLEAFVDLR (235 aa)) are alpha N-terminal domain (alpha-NTD). The interval 249–329 (FDPILLRPVD…DWPPASIADE (81 aa)) is alpha C-terminal domain (alpha-CTD).

The protein belongs to the RNA polymerase alpha chain family. As to quaternary structure, homodimer. The RNAP catalytic core consists of 2 alpha, 1 beta, 1 beta' and 1 omega subunit. When a sigma factor is associated with the core the holoenzyme is formed, which can initiate transcription.

It catalyses the reaction RNA(n) + a ribonucleoside 5'-triphosphate = RNA(n+1) + diphosphate. Functionally, DNA-dependent RNA polymerase catalyzes the transcription of DNA into RNA using the four ribonucleoside triphosphates as substrates. This is DNA-directed RNA polymerase subunit alpha from Salmonella choleraesuis (strain SC-B67).